The primary structure comprises 263 residues: Aminoglycoside 3'-phosphotransferase (263 aa).

D189 acts as the Proton acceptor in catalysis.

This sequence belongs to the aminoglycoside phosphotransferase family.

It catalyses the reaction kanamycin A + ATP = kanamycin 3'-phosphate + ADP + H(+). In terms of biological role, resistance to kanamycin and structurally-related aminoglycosides, including amikacin. The protein is Aminoglycoside 3'-phosphotransferase (aphA) of Staphylococcus aureus.